The sequence spans 151 residues: Transcriptional repressor NrdR (151 aa).

A zinc finger spans residues 3 to 34 (CPYCGYGESKVVDSRATDDKMAIRRRRECLKC). In terms of domain architecture, ATP-cone spans 49–139 (LLVIKKNMSR…VYRQFKDINT (91 aa)).

This sequence belongs to the NrdR family. It depends on Zn(2+) as a cofactor.

In terms of biological role, negatively regulates transcription of bacterial ribonucleotide reductase nrd genes and operons by binding to NrdR-boxes. The sequence is that of Transcriptional repressor NrdR from Clostridium kluyveri (strain NBRC 12016).